Reading from the N-terminus, the 186-residue chain is Peptidyl-tRNA hydrolase (186 aa).

TRNA is bound at residue tyrosine 14. The Proton acceptor role is filled by histidine 19. 3 residues coordinate tRNA: phenylalanine 65, asparagine 67, and asparagine 113.

It belongs to the PTH family. Monomer.

Its subcellular location is the cytoplasm. It carries out the reaction an N-acyl-L-alpha-aminoacyl-tRNA + H2O = an N-acyl-L-amino acid + a tRNA + H(+). Functionally, hydrolyzes ribosome-free peptidyl-tRNAs (with 1 or more amino acids incorporated), which drop off the ribosome during protein synthesis, or as a result of ribosome stalling. Catalyzes the release of premature peptidyl moieties from peptidyl-tRNA molecules trapped in stalled 50S ribosomal subunits, and thus maintains levels of free tRNAs and 50S ribosomes. This is Peptidyl-tRNA hydrolase from Limosilactobacillus reuteri (strain DSM 20016) (Lactobacillus reuteri).